A 492-amino-acid polypeptide reads, in one-letter code: MYRYSALELAKAVTLGELTATGVTQHFFHRIEEAEGQVGAFISLCKEQALEQAELIDKKRSRGEPLGKLAGVPVGIKDNIHVTGLKTTCASRVLENYQPPFDATVVERIKKEDGIILGKLNMDEFAMGSTTLYSAFHPTHNPWDLSRVPGGSSGGSAAAVSARFCPVALGSDTGGSIRQPAAFCGVVGFKPSYGAVSRYGLVAFASSLDQIGPLANTVEDVALMMDVFSGRDPKDATSREFFRDSFMSKLSTEVPKVIGVPRTFLEGLRDDIRENFFSSLAIFEGEGTHLVDVELDILSHAVSIYYILASAEAATNLARFDGVRYGYRSPQAHTISQLYDLSRGEGFGKEVMRRILLGNYVLSAERQNVYYKKATAVRAKIVKAFRTAFEKCEILAMPVCSSPAFEIGEILDPVTLYLQDIYTVAMNLAYLPAIAVPSGFSKEGLPLGLQIIGQQGQDQQVCQVGYSFQEHAQIKQLFSKRYAKSVVLGGQS.

Residues Lys-77 and Ser-152 each act as charge relay system in the active site. The active-site Acyl-ester intermediate is Ser-176.

The protein belongs to the amidase family. GatA subfamily. In terms of assembly, heterotrimer of A, B and C subunits.

It catalyses the reaction L-glutamyl-tRNA(Gln) + L-glutamine + ATP + H2O = L-glutaminyl-tRNA(Gln) + L-glutamate + ADP + phosphate + H(+). In terms of biological role, allows the formation of correctly charged Gln-tRNA(Gln) through the transamidation of misacylated Glu-tRNA(Gln) in organisms which lack glutaminyl-tRNA synthetase. The reaction takes place in the presence of glutamine and ATP through an activated gamma-phospho-Glu-tRNA(Gln). This chain is Glutamyl-tRNA(Gln) amidotransferase subunit A (gatA), found in Chlamydia pneumoniae (Chlamydophila pneumoniae).